A 409-amino-acid chain; its full sequence is Threonine dehydratase-like protein AKTS1-1 (409 aa).

The disordered stretch occupies residues 1 to 21; that stretch reads MADYLRQVMPENDSDSEALPR. Lys111 is modified (N6-(pyridoxal phosphate)lysine). Residues Asn138, 239–243, and Ser368 each bind pyridoxal 5'-phosphate; that span reads GEGSL.

Belongs to the serine/threonine dehydratase family. Requires pyridoxal 5'-phosphate as cofactor.

The protein operates within mycotoxin biosynthesis. Its function is as follows. Threonine dehydratase-like protein; part of the gene clusters that mediate the biosynthesis of the host-selective toxins (HSTs) AK-toxins responsible for Japanese pear black spot disease by the Japanese pear pathotype. AK-toxins are esters of 9,10-epoxy 8-hydroxy 9-methyldecatrienoic acid (EDA). On cellular level, AK-toxins affect plasma membrane of susceptible cells and cause a sudden increase in loss of K(+) after a few minutes of toxin treatment. The acyl-CoA ligase AKT1, the hydrolase AKT2 and enoyl-CoA hydratase AKT3 are all involved in the biosynthesis of the AK-, AF- and ACT-toxin common 9,10-epoxy-8-hydroxy-9-methyl-decatrienoic acid (EDA) structural moiety. Part of the EDA biosynthesis occurs in the peroxisome since these 3 enzymes are localized in peroxisomes. The exact roles of the 3 enzymes, as well as of additional AK-toxin clusters enzymes, including AKT4, AKT6 and AKTS1, have still to be elucidated. The Cytochrome P450 monooxygenase AKT7 on the other side functions to limit production of EDA and AK-toxin, probably via the catalysis of a side reaction of EDA or its precursor. In Alternaria alternata (Alternaria rot fungus), this protein is Threonine dehydratase-like protein AKTS1-1.